The following is an 873-amino-acid chain: DNA mismatch repair protein MutS (873 aa).

601 to 608 (GPNMSGKS) lines the ATP pocket.

The protein belongs to the DNA mismatch repair MutS family.

Functionally, this protein is involved in the repair of mismatches in DNA. It is possible that it carries out the mismatch recognition step. This protein has a weak ATPase activity. In Staphylococcus epidermidis (strain ATCC 12228 / FDA PCI 1200), this protein is DNA mismatch repair protein MutS.